The chain runs to 394 residues: Phosphoglycerate kinase (394 aa).

Substrate-binding positions include 21 to 23 (DFN), Arg-36, 59 to 62 (HLGR), Arg-118, and Arg-151. Ser-183 carries the post-translational modification Phosphoserine. Position 201 (Lys-201) interacts with ATP. The residue at position 299 (Thr-299) is a Phosphothreonine. Residues Glu-323 and 350-353 (GGDS) contribute to the ATP site.

This sequence belongs to the phosphoglycerate kinase family. As to quaternary structure, monomer.

It is found in the cytoplasm. The catalysed reaction is (2R)-3-phosphoglycerate + ATP = (2R)-3-phospho-glyceroyl phosphate + ADP. It participates in carbohydrate degradation; glycolysis; pyruvate from D-glyceraldehyde 3-phosphate: step 2/5. This Shouchella clausii (strain KSM-K16) (Alkalihalobacillus clausii) protein is Phosphoglycerate kinase.